A 403-amino-acid polypeptide reads, in one-letter code: Argininosuccinate synthase (403 aa).

Residue 10–18 (AYSGGLDTS) participates in ATP binding. Residue Y87 participates in L-citrulline binding. Residue G117 participates in ATP binding. Residues T119, N123, and D124 each coordinate L-aspartate. N123 is a binding site for L-citrulline. L-citrulline contacts are provided by R127, S175, E260, and Y272.

Belongs to the argininosuccinate synthase family. Type 1 subfamily. As to quaternary structure, homotetramer.

Its subcellular location is the cytoplasm. The catalysed reaction is L-citrulline + L-aspartate + ATP = 2-(N(omega)-L-arginino)succinate + AMP + diphosphate + H(+). Its pathway is amino-acid biosynthesis; L-arginine biosynthesis; L-arginine from L-ornithine and carbamoyl phosphate: step 2/3. This Bacillus velezensis (strain DSM 23117 / BGSC 10A6 / LMG 26770 / FZB42) (Bacillus amyloliquefaciens subsp. plantarum) protein is Argininosuccinate synthase.